A 50-amino-acid chain; its full sequence is ATP synthase protein 8 (50 aa).

The chain crosses the membrane as a helical span at residues 13–32 (ITFTFIILAITVYILSKYIL).

The protein belongs to the ATPase protein 8 family. In terms of assembly, F-type ATPases have 2 components, CF(1) - the catalytic core - and CF(0) - the membrane proton channel.

It localises to the mitochondrion membrane. Its function is as follows. Mitochondrial membrane ATP synthase (F(1)F(0) ATP synthase or Complex V) produces ATP from ADP in the presence of a proton gradient across the membrane which is generated by electron transport complexes of the respiratory chain. F-type ATPases consist of two structural domains, F(1) - containing the extramembraneous catalytic core and F(0) - containing the membrane proton channel, linked together by a central stalk and a peripheral stalk. During catalysis, ATP synthesis in the catalytic domain of F(1) is coupled via a rotary mechanism of the central stalk subunits to proton translocation. Part of the complex F(0) domain. Minor subunit located with subunit a in the membrane. This Podospora anserina (strain S / ATCC MYA-4624 / DSM 980 / FGSC 10383) (Pleurage anserina) protein is ATP synthase protein 8 (ATP8).